A 479-amino-acid chain; its full sequence is PRAME family member 19 (479 aa).

The LRR 1 repeat unit spans residues Gln15–Arg38. The stretch at Arg97–Cys124 is one LRR 1; degenerate repeat. The LRR 2; degenerate repeat unit spans residues His179–Tyr203. The LRR 3; degenerate repeat unit spans residues Pro204–Gln230. One copy of the LRR 4; degenerate repeat lies at Met231–Arg265. LRR repeat units lie at residues Leu266 to Leu291, Lys292 to Lys323, Gln324 to Ala342, Ala348 to Arg375, and Cys376 to His400.

Belongs to the PRAME family.

This Homo sapiens (Human) protein is PRAME family member 19.